The following is a 195-amino-acid chain: Probable thymidylate kinase (195 aa).

7-14 (GIDGVGKT) contacts ATP.

It belongs to the thymidylate kinase family.

It carries out the reaction dTMP + ATP = dTDP + ADP. The sequence is that of Probable thymidylate kinase from Methanosphaera stadtmanae (strain ATCC 43021 / DSM 3091 / JCM 11832 / MCB-3).